The sequence spans 348 residues: MATINIIDVKKNYGAVPAVKGINLSVADGELIVLVGPSGCGKSTLLRMIAGLETISEGHVEIAGRNVNKAEPADRDIAMVFQNYALYPHMTVRGNLEYGLKNRGTERAEINRRVAEAAEILEIGPMLDRKPRELSGGQRQRVAMGRAIVREPAAFLFDEPLSNLDAKLRVQMRVEIRRLQRRLKTTSIYVTHDQLEAMTLADRLVVMNGGLVEQVGTPVAVYDRPASLFVASFIGSPPMNLVPIDVLRAADSASSLALPAGTDMVGLRPDALLVTKPAEPSVRLDATVELLEPIGGESHLHVRLGGSQQTVVLTVPGRPDFAENANIDVFARVGAMHPFNSDTGKRTD.

Positions 4-234 (INIIDVKKNY…PASLFVASFI (231 aa)) constitute an ABC transporter domain. 36 to 43 (GPSGCGKS) is an ATP binding site.

This sequence belongs to the ABC transporter superfamily. sn-glycerol-3-phosphate importer (TC 3.A.1.1.3) family. In terms of assembly, the complex is composed of two ATP-binding proteins (UgpC), two transmembrane proteins (UgpA and UgpE) and a solute-binding protein (UgpB).

It localises to the cell inner membrane. It carries out the reaction sn-glycerol 3-phosphate(out) + ATP + H2O = sn-glycerol 3-phosphate(in) + ADP + phosphate + H(+). Part of the ABC transporter complex UgpBAEC involved in sn-glycerol-3-phosphate (G3P) import. Responsible for energy coupling to the transport system. The chain is sn-glycerol-3-phosphate import ATP-binding protein UgpC 3 from Rhizobium johnstonii (strain DSM 114642 / LMG 32736 / 3841) (Rhizobium leguminosarum bv. viciae).